Consider the following 323-residue polypeptide: Protoheme IX farnesyltransferase (323 aa).

Helical transmembrane passes span 50-70, 97-117, 118-138, 150-170, 184-204, 231-248, 252-274, and 293-313; these read IVLI…ANTF, NRDA…WLWL, LCDS…YIFV, NIVW…AVIV, AIVL…ALAM, IVWY…LIPA, IYAA…LHLG, and YLAV…ETIG.

This sequence belongs to the UbiA prenyltransferase family. Protoheme IX farnesyltransferase subfamily.

Its subcellular location is the cell membrane. The catalysed reaction is heme b + (2E,6E)-farnesyl diphosphate + H2O = Fe(II)-heme o + diphosphate. It functions in the pathway porphyrin-containing compound metabolism; heme O biosynthesis; heme O from protoheme: step 1/1. Functionally, converts heme B (protoheme IX) to heme O by substitution of the vinyl group on carbon 2 of heme B porphyrin ring with a hydroxyethyl farnesyl side group. The polypeptide is Protoheme IX farnesyltransferase (Corynebacterium glutamicum (strain R)).